The chain runs to 91 residues: LYR motif-containing protein 4 (91 aa).

Pantetheine 4'-phosphate-binding residues include Arg6 and Lys44. Lys47 bears the N6-succinyllysine mark.

This sequence belongs to the complex I LYR family. In terms of assembly, homodimer. Component of the mitochondrial core iron-sulfur cluster (ISC) complex composed of NFS1, LYRM4, NDUFAB1, ISCU, FXN, and FDX2; this complex is a heterohexamer containing two copies of each monomer. Component of the cyteine desulfurase complex composed of NFS1, LYRM4 and NDUFAB1; this complex contributes to the stability and cysteine desulfurase activity of NFS1. Interacts with FXN; this interaction is nickel-dependent. Interacts with the cytoplasmic form of NFS1; the complex increases the stability of NFS1. Forms a complex with the cytoplasmic form of NFS1; this complex increases the stability and cysteine desulfurase activity of NFS1. Interacts with NFS1.

The protein localises to the mitochondrion. It is found in the nucleus. It functions in the pathway cofactor biosynthesis; iron-sulfur cluster biosynthesis. Stabilizing factor, of the core iron-sulfur cluster (ISC) assembly complex, that regulates, in association with NDUFAB1, the stability and the cysteine desulfurase activity of NFS1 and participates in the [2Fe-2S] clusters assembly on the scaffolding protein ISCU. The core iron-sulfur cluster (ISC) assembly complex is involved in the de novo synthesis of a [2Fe-2S] cluster, the first step of the mitochondrial iron-sulfur protein biogenesis. This process is initiated by the cysteine desulfurase complex (NFS1:LYRM4:NDUFAB1) that produces persulfide which is delivered on the scaffold protein ISCU in a FXN-dependent manner. Then this complex is stabilized by FDX2 which provides reducing equivalents to accomplish the [2Fe-2S] cluster assembly. Finally, the [2Fe-2S] cluster is transferred from ISCU to chaperone proteins, including HSCB, HSPA9 and GLRX5. May also participates in the iron-sulfur protein biogenesis in the cytoplasm through its interaction with the cytoplasmic form of NFS1. The chain is LYR motif-containing protein 4 from Bos taurus (Bovine).